The primary structure comprises 255 residues: Thiazole synthase (255 aa).

K96 (schiff-base intermediate with DXP) is an active-site residue. 1-deoxy-D-xylulose 5-phosphate-binding positions include G157, 183–184 (AG), and 205–206 (NS).

Belongs to the ThiG family. In terms of assembly, homotetramer. Forms heterodimers with either ThiH or ThiS.

It is found in the cytoplasm. It catalyses the reaction [ThiS sulfur-carrier protein]-C-terminal-Gly-aminoethanethioate + 2-iminoacetate + 1-deoxy-D-xylulose 5-phosphate = [ThiS sulfur-carrier protein]-C-terminal Gly-Gly + 2-[(2R,5Z)-2-carboxy-4-methylthiazol-5(2H)-ylidene]ethyl phosphate + 2 H2O + H(+). The protein operates within cofactor biosynthesis; thiamine diphosphate biosynthesis. Functionally, catalyzes the rearrangement of 1-deoxy-D-xylulose 5-phosphate (DXP) to produce the thiazole phosphate moiety of thiamine. Sulfur is provided by the thiocarboxylate moiety of the carrier protein ThiS. In vitro, sulfur can be provided by H(2)S. In Staphylococcus carnosus (strain TM300), this protein is Thiazole synthase.